A 379-amino-acid polypeptide reads, in one-letter code: F-box protein At5g18160 (379 aa).

Residues 1–26 are disordered; it reads MDKQDEKKQGTTKSSSTLTTRCSHGN. Over residues 11–26 the composition is skewed to polar residues; that stretch reads TTKSSSTLTTRCSHGN. The region spanning 28 to 74 is the F-box domain; it reads ISQSNSIPLDITIEILSRLPAKSIVRSRSVSKLWSSITTTPEFIKHR.

The protein is F-box protein At5g18160 of Arabidopsis thaliana (Mouse-ear cress).